Consider the following 42-residue polypeptide: Large ribosomal subunit protein bL36 (42 aa).

This sequence belongs to the bacterial ribosomal protein bL36 family.

In Ehrlichia chaffeensis (strain ATCC CRL-10679 / Arkansas), this protein is Large ribosomal subunit protein bL36.